We begin with the raw amino-acid sequence, 354 residues long: Divinyl chlorophyll a/b light-harvesting protein PcbF (354 aa).

A run of 6 helical transmembrane segments spans residues 27 to 47, 88 to 108, 140 to 160, 201 to 221, 248 to 268, and 315 to 335; these read FIASHAAHTGMIAFGAGSNTL, VVTLAILHLILSMVYGAGGLL, FILGHHLILFGLACAWFVEWA, VMGGHAFLAFAEITGGCFHAI, AILSFSLAGIGWMAIVAAFWC, and TANFHYIAGFFAFQGHLWHAL.

It belongs to the PsbB/PsbC family. IsiA/Pcb subfamily. In terms of assembly, the antenna complex consists of divinyl chlorophylls (a and b) and divinyl chlorophyll a/b binding proteins and binds more divinyl chlorophyll b than does the antenna complex from high-light-adapted Prochlorococcus. It depends on divinyl chlorophyll a as a cofactor. Requires divinyl chlorophyll b as cofactor.

It localises to the cellular thylakoid membrane. Functionally, the antenna complex functions as a light receptor, it captures and delivers excitation energy to photosystems II and I. The Prochlorales pcb genes are not related to higher plant LHCs. In Prochlorococcus marinus (strain SARG / CCMP1375 / SS120), this protein is Divinyl chlorophyll a/b light-harvesting protein PcbF (pcbF).